An 86-amino-acid chain; its full sequence is Large ribosomal subunit protein bL31 (86 aa).

The protein belongs to the bacterial ribosomal protein bL31 family. Type A subfamily. Part of the 50S ribosomal subunit.

In terms of biological role, binds the 23S rRNA. The chain is Large ribosomal subunit protein bL31 from Parasynechococcus marenigrum (strain WH8102).